A 79-amino-acid chain; its full sequence is ATP synthase subunit c (79 aa).

A run of 2 helical transmembrane segments spans residues 11–31 (IAVA…IGIL) and 53–73 (FFVV…LGLY).

Belongs to the ATPase C chain family. In terms of assembly, F-type ATPases have 2 components, F(1) - the catalytic core - and F(0) - the membrane proton channel. F(1) has five subunits: alpha(3), beta(3), gamma(1), delta(1), epsilon(1). F(0) has three main subunits: a(1), b(2) and c(10-14). The alpha and beta chains form an alternating ring which encloses part of the gamma chain. F(1) is attached to F(0) by a central stalk formed by the gamma and epsilon chains, while a peripheral stalk is formed by the delta and b chains.

Its subcellular location is the cell membrane. Functionally, f(1)F(0) ATP synthase produces ATP from ADP in the presence of a proton or sodium gradient. F-type ATPases consist of two structural domains, F(1) containing the extramembraneous catalytic core and F(0) containing the membrane proton channel, linked together by a central stalk and a peripheral stalk. During catalysis, ATP synthesis in the catalytic domain of F(1) is coupled via a rotary mechanism of the central stalk subunits to proton translocation. Its function is as follows. Key component of the F(0) channel; it plays a direct role in translocation across the membrane. A homomeric c-ring of between 10-14 subunits forms the central stalk rotor element with the F(1) delta and epsilon subunits. This chain is ATP synthase subunit c, found in Buchnera aphidicola subsp. Acyrthosiphon pisum (strain 5A).